We begin with the raw amino-acid sequence, 89 residues long: MAVTSAKKNPGSPGIEELISRLEEITRNIENPETGIENSIALYEEGLAIAEQCKKRLQEARKKIEIINPELAKNWPDTARNRDLFDSEI.

It belongs to the XseB family. As to quaternary structure, heterooligomer composed of large and small subunits.

The protein resides in the cytoplasm. It carries out the reaction Exonucleolytic cleavage in either 5'- to 3'- or 3'- to 5'-direction to yield nucleoside 5'-phosphates.. Bidirectionally degrades single-stranded DNA into large acid-insoluble oligonucleotides, which are then degraded further into small acid-soluble oligonucleotides. The protein is Exodeoxyribonuclease 7 small subunit of Chlorobium phaeobacteroides (strain DSM 266 / SMG 266 / 2430).